Here is a 504-residue protein sequence, read N- to C-terminus: ATP synthase subunit alpha, chloroplastic (504 aa).

An ATP-binding site is contributed by 170–177 (GDRQTGKT). Phosphothreonine is present on Thr257.

The protein belongs to the ATPase alpha/beta chains family. As to quaternary structure, F-type ATPases have 2 components, CF(1) - the catalytic core - and CF(0) - the membrane proton channel. CF(1) has five subunits: alpha(3), beta(3), gamma(1), delta(1), epsilon(1). CF(0) has four main subunits: a, b, b' and c.

The protein resides in the plastid. It is found in the chloroplast thylakoid membrane. The enzyme catalyses ATP + H2O + 4 H(+)(in) = ADP + phosphate + 5 H(+)(out). Its function is as follows. Produces ATP from ADP in the presence of a proton gradient across the membrane. The alpha chain is a regulatory subunit. The chain is ATP synthase subunit alpha, chloroplastic from Nasturtium officinale (Watercress).